A 226-amino-acid chain; its full sequence is MYSISFQEDSLLPRERLAKEGVEALSNQELLAILLRTGTRQASVFEIAQKVLNNLSSLTDLKKMTLQELQSLSGIGRVKAIELQAMIELGHRIHKHETLEMESILSSQKLAKKMQQELGDKKQEHLVALYLNTQNQIIHQQTIFIGSVTRSIAEPREILHYAIKHMATSLVLVHNHPSGAVAPSQNDDHVTKLVKEACELMGIVLLDHLIVSHSNYFSYREKTDLI.

Residues 103–225 enclose the MPN domain; it reads SILSSQKLAK…YFSYREKTDL (123 aa). 3 residues coordinate Zn(2+): histidine 174, histidine 176, and aspartate 187. A JAMM motif motif is present at residues 174–187; sequence HNHPSGAVAPSQND.

It belongs to the UPF0758 family.

The protein is UPF0758 protein SPD_0975 of Streptococcus pneumoniae serotype 2 (strain D39 / NCTC 7466).